The primary structure comprises 277 residues: Diaminopimelate epimerase (277 aa).

Residues Asn15 and Asn74 each contribute to the substrate site. The Proton donor role is filled by Cys83. Residues 84–85 (GN), Asn159, Asn194, and 212–213 (ER) contribute to the substrate site. The active-site Proton acceptor is the Cys221. 222-223 (GT) is a substrate binding site.

Belongs to the diaminopimelate epimerase family. Homodimer.

The protein resides in the cytoplasm. The catalysed reaction is (2S,6S)-2,6-diaminopimelate = meso-2,6-diaminopimelate. The protein operates within amino-acid biosynthesis; L-lysine biosynthesis via DAP pathway; DL-2,6-diaminopimelate from LL-2,6-diaminopimelate: step 1/1. Functionally, catalyzes the stereoinversion of LL-2,6-diaminopimelate (L,L-DAP) to meso-diaminopimelate (meso-DAP), a precursor of L-lysine and an essential component of the bacterial peptidoglycan. In Corynebacterium glutamicum (strain R), this protein is Diaminopimelate epimerase.